The following is an 853-amino-acid chain: Transcription factor CPH2 (853 aa).

Disordered stretches follow at residues 165-209 and 296-353; these read EPPI…DKNS and NMNP…VHHP. Positions 180–194 are enriched in low complexity; sequence TTTVSSTNSITNTTK. A bHLH domain is found at 205–274; the sequence is KDKNSHNMIE…TKATEYIKHL (70 aa). Over residues 301–315 the composition is skewed to pro residues; sequence SLPPPPQQMQAPPQP. Residues 330–352 show a composition bias toward low complexity; it reads TPASQYPSPQQQVSPTQQQTVHH.

It localises to the nucleus. Transcription factor that positively controls filamentous growth, virulence, and invasiveness. Binds directly to the two SRE-1-like elements upstream of TEC1 and thus positively regulates expression of this important hyphal growth regulator. Functions independently of known signaling cascades involving EFG1. Also regulates gene expression during intestinal colonization but is not involved in host cell adhesion. This chain is Transcription factor CPH2 (CPH2), found in Candida albicans (strain SC5314 / ATCC MYA-2876) (Yeast).